A 152-amino-acid polypeptide reads, in one-letter code: Protein Smg homolog (152 aa).

Belongs to the Smg family.

This chain is Protein Smg homolog, found in Nitrosomonas europaea (strain ATCC 19718 / CIP 103999 / KCTC 2705 / NBRC 14298).